Here is a 500-residue protein sequence, read N- to C-terminus: Lysine--tRNA ligase (500 aa).

Residues Glu411 and Glu418 each coordinate Mg(2+).

It belongs to the class-II aminoacyl-tRNA synthetase family. In terms of assembly, homodimer. It depends on Mg(2+) as a cofactor.

The protein resides in the cytoplasm. The enzyme catalyses tRNA(Lys) + L-lysine + ATP = L-lysyl-tRNA(Lys) + AMP + diphosphate. This chain is Lysine--tRNA ligase, found in Actinobacillus pleuropneumoniae serotype 5b (strain L20).